An 842-amino-acid chain; its full sequence is Leucine--tRNA ligase (842 aa).

A 'HIGH' region motif is present at residues 44-55 (PYPSANGLHVGH). The 'KMSKS' region motif lies at 619–623 (KMSKS). Position 622 (Lys-622) interacts with ATP.

Belongs to the class-I aminoacyl-tRNA synthetase family.

It localises to the cytoplasm. The enzyme catalyses tRNA(Leu) + L-leucine + ATP = L-leucyl-tRNA(Leu) + AMP + diphosphate. In Borrelia recurrentis (strain A1), this protein is Leucine--tRNA ligase.